The following is a 484-amino-acid chain: tRNA-2-methylthio-N(6)-dimethylallyladenosine synthase (484 aa).

Residues 36 to 153 (GKLYIKTHGC…LPELIRARRE (118 aa)) enclose the MTTase N-terminal domain. The [4Fe-4S] cluster site is built by Cys45, Cys82, Cys116, Cys190, Cys194, and Cys197. Residues 176–415 (RAEGPSAFVS…HINAHAASIS (240 aa)) enclose the Radical SAM core domain. A TRAM domain is found at 416–479 (QSMVGSVQRV…SNSLRGRIQL (64 aa)). Positions 428-450 (EGPSRRDPNELTGKSENMRPVNF) are disordered.

It belongs to the methylthiotransferase family. MiaB subfamily. Monomer. [4Fe-4S] cluster serves as cofactor.

The protein resides in the cytoplasm. The catalysed reaction is N(6)-dimethylallyladenosine(37) in tRNA + (sulfur carrier)-SH + AH2 + 2 S-adenosyl-L-methionine = 2-methylsulfanyl-N(6)-dimethylallyladenosine(37) in tRNA + (sulfur carrier)-H + 5'-deoxyadenosine + L-methionine + A + S-adenosyl-L-homocysteine + 2 H(+). Functionally, catalyzes the methylthiolation of N6-(dimethylallyl)adenosine (i(6)A), leading to the formation of 2-methylthio-N6-(dimethylallyl)adenosine (ms(2)i(6)A) at position 37 in tRNAs that read codons beginning with uridine. This chain is tRNA-2-methylthio-N(6)-dimethylallyladenosine synthase, found in Xanthomonas euvesicatoria pv. vesicatoria (strain 85-10) (Xanthomonas campestris pv. vesicatoria).